Here is a 190-residue protein sequence, read N- to C-terminus: Nascent polypeptide-associated complex subunit alpha (190 aa).

2 disordered regions span residues 20-42 (FDSDDAGADVHASDKVASRAERK) and 123-155 (SLQNSSASGAEKKVEEEEEDDDSPIDEEGVDAK). The span at 30-40 (HASDKVASRAE) shows a compositional bias: basic and acidic residues. The 66-residue stretch at 37 to 102 (SRAERKSRKA…AKAEDMSQLA (66 aa)) folds into the NAC-A/B domain. Residues 138 to 151 (EEEEDDDSPIDEEG) show a composition bias toward acidic residues. Residues 152-189 (VDAKDIDLVMQQVSCSRRKAVKALKESNGDLINAIMNA) enclose the UBA domain.

This sequence belongs to the NAC-alpha family. As to quaternary structure, part of the nascent polypeptide-associated complex (NAC), consisting of EGD2 and EGD1. NAC associates with ribosomes via EGD1.

The protein localises to the cytoplasm. It is found in the nucleus. In terms of biological role, component of the nascent polypeptide-associated complex (NAC), a dynamic component of the ribosomal exit tunnel, protecting the emerging polypeptides from interaction with other cytoplasmic proteins to ensure appropriate nascent protein targeting. The NAC complex also promotes mitochondrial protein import by enhancing productive ribosome interactions with the outer mitochondrial membrane and blocks the inappropriate interaction of ribosomes translating non-secretory nascent polypeptides with translocation sites in the membrane of the endoplasmic reticulum. EGD2 may also be involved in transcription regulation. The sequence is that of Nascent polypeptide-associated complex subunit alpha (EGD2) from Mycosarcoma maydis (Corn smut fungus).